We begin with the raw amino-acid sequence, 133 residues long: ATP synthase epsilon chain (133 aa).

The protein belongs to the ATPase epsilon chain family. F-type ATPases have 2 components, CF(1) - the catalytic core - and CF(0) - the membrane proton channel. CF(1) has five subunits: alpha(3), beta(3), gamma(1), delta(1), epsilon(1). CF(0) has three main subunits: a, b and c.

Its subcellular location is the cell membrane. Produces ATP from ADP in the presence of a proton gradient across the membrane. The protein is ATP synthase epsilon chain of Bacillus anthracis (strain A0248).